The sequence spans 306 residues: Probable L,D-transpeptidase YbiS (306 aa).

An N-terminal signal peptide occupies residues 1–24; sequence MNMKLKTLFAAAFAVVGFCSTASA. The region spanning 99–234 is the L,D-TPase catalytic domain; that stretch reads EGIVINSAEM…VPVGTRVQFI (136 aa). The active-site Proton donor/acceptor is histidine 194. Cysteine 210 acts as the Nucleophile in catalysis.

It belongs to the YkuD family.

Its subcellular location is the periplasm. It functions in the pathway cell wall biogenesis; peptidoglycan biosynthesis. Responsible, at least in part, for anchoring of the major outer membrane lipoprotein (Lpp) to the peptidoglycan via a meso-diaminopimelyl-L-Lys- bond on the terminal residue of Lpp. The sequence is that of Probable L,D-transpeptidase YbiS (ybiS) from Escherichia coli O6:H1 (strain CFT073 / ATCC 700928 / UPEC).